A 335-amino-acid chain; its full sequence is Transcriptional adapter 1 (335 aa).

Positions 83–103 (LPWPGGSAAKPGKPKGKKKLS) are disordered. Positions 84–93 (PWPGGSAAKP) are enriched in low complexity. Over residues 94–103 (GKPKGKKKLS) the composition is skewed to basic residues.

Belongs to the TADA1 family. As to quaternary structure, component of the STAGA transcription coactivator-HAT complex, at least composed of SUPT3H, GCN5L2, TAF5L, TAF6L, SUPT7L, TADA3L, TAD1L, TAF10, TAF12, TRRAP and TAF9.

The protein localises to the nucleus. Functionally, probably involved in transcriptional regulation. The chain is Transcriptional adapter 1 (TADA1) from Homo sapiens (Human).